A 241-amino-acid polypeptide reads, in one-letter code: DNA repair protein RecO (241 aa).

The protein belongs to the RecO family.

Involved in DNA repair and RecF pathway recombination. The chain is DNA repair protein RecO from Yersinia pseudotuberculosis serotype O:1b (strain IP 31758).